The primary structure comprises 503 residues: ATP synthase subunit alpha (503 aa).

ATP is bound at residue 169–176; sequence GDRKTGKT.

This sequence belongs to the ATPase alpha/beta chains family. In terms of assembly, F-type ATPases have 2 components, CF(1) - the catalytic core - and CF(0) - the membrane proton channel. CF(1) has five subunits: alpha(3), beta(3), gamma(1), delta(1), epsilon(1). CF(0) has three main subunits: a(1), b(2) and c(9-12). The alpha and beta chains form an alternating ring which encloses part of the gamma chain. CF(1) is attached to CF(0) by a central stalk formed by the gamma and epsilon chains, while a peripheral stalk is formed by the delta and b chains.

The protein resides in the cell membrane. It carries out the reaction ATP + H2O + 4 H(+)(in) = ADP + phosphate + 5 H(+)(out). Produces ATP from ADP in the presence of a proton gradient across the membrane. The alpha chain is a regulatory subunit. The chain is ATP synthase subunit alpha from Lactobacillus delbrueckii subsp. bulgaricus (strain ATCC 11842 / DSM 20081 / BCRC 10696 / JCM 1002 / NBRC 13953 / NCIMB 11778 / NCTC 12712 / WDCM 00102 / Lb 14).